A 751-amino-acid chain; its full sequence is Photosystem I P700 chlorophyll a apoprotein A1 (751 aa).

8 helical membrane-spanning segments follow: residues 73-96 (IFSA…FHGA), 159-182 (LYST…FHYH), 198-222 (MNHH…HVSL), 294-312 (TAHH…GHMY), 349-372 (WHAQ…HHMY), 388-414 (LSLF…IFMV), 436-458 (AIIS…LYIH), and 533-551 (FLVH…LILL). Positions 575 and 584 each coordinate [4Fe-4S] cluster. Transmembrane regions (helical) follow at residues 591-612 (HVFL…HFSW) and 665-687 (LSAY…MFLF). Residue histidine 676 coordinates chlorophyll a'. Residues methionine 684 and tyrosine 692 each coordinate chlorophyll a. Tryptophan 693 serves as a coordination point for phylloquinone. Residues 725-745 (AVGVAHYLLGGIATTWAFFLA) form a helical membrane-spanning segment.

Belongs to the PsaA/PsaB family. The PsaA/B heterodimer binds the P700 chlorophyll special pair and subsequent electron acceptors. PSI consists of a core antenna complex that captures photons, and an electron transfer chain that converts photonic excitation into a charge separation. The eukaryotic PSI reaction center is composed of at least 11 subunits. It depends on P700 is a chlorophyll a/chlorophyll a' dimer, A0 is one or more chlorophyll a, A1 is one or both phylloquinones and FX is a shared 4Fe-4S iron-sulfur center. as a cofactor.

It is found in the plastid. It localises to the chloroplast thylakoid membrane. It carries out the reaction reduced [plastocyanin] + hnu + oxidized [2Fe-2S]-[ferredoxin] = oxidized [plastocyanin] + reduced [2Fe-2S]-[ferredoxin]. PsaA and PsaB bind P700, the primary electron donor of photosystem I (PSI), as well as the electron acceptors A0, A1 and FX. PSI is a plastocyanin/cytochrome c6-ferredoxin oxidoreductase, converting photonic excitation into a charge separation, which transfers an electron from the donor P700 chlorophyll pair to the spectroscopically characterized acceptors A0, A1, FX, FA and FB in turn. Oxidized P700 is reduced on the lumenal side of the thylakoid membrane by plastocyanin or cytochrome c6. The chain is Photosystem I P700 chlorophyll a apoprotein A1 from Nephroselmis olivacea (Green alga).